A 570-amino-acid chain; its full sequence is Proline--tRNA ligase (570 aa).

Belongs to the class-II aminoacyl-tRNA synthetase family. ProS type 1 subfamily. In terms of assembly, homodimer.

Its subcellular location is the cytoplasm. It carries out the reaction tRNA(Pro) + L-proline + ATP = L-prolyl-tRNA(Pro) + AMP + diphosphate. Catalyzes the attachment of proline to tRNA(Pro) in a two-step reaction: proline is first activated by ATP to form Pro-AMP and then transferred to the acceptor end of tRNA(Pro). As ProRS can inadvertently accommodate and process non-cognate amino acids such as alanine and cysteine, to avoid such errors it has two additional distinct editing activities against alanine. One activity is designated as 'pretransfer' editing and involves the tRNA(Pro)-independent hydrolysis of activated Ala-AMP. The other activity is designated 'posttransfer' editing and involves deacylation of mischarged Ala-tRNA(Pro). The misacylated Cys-tRNA(Pro) is not edited by ProRS. The sequence is that of Proline--tRNA ligase from Geotalea daltonii (strain DSM 22248 / JCM 15807 / FRC-32) (Geobacter daltonii).